The chain runs to 126 residues: Large ribosomal subunit protein bL17c (126 aa).

Residues methionine 1–alanine 10 constitute a chloroplast transit peptide.

Component of the chloroplast large ribosomal subunit (LSU). Mature 70S chloroplast ribosomes of higher plants consist of a small (30S) and a large (50S) subunit. The 30S small subunit contains 1 molecule of ribosomal RNA (16S rRNA) and 24 different proteins. The 50S large subunit contains 3 rRNA molecules (23S, 5S and 4.5S rRNA) and 33 different proteins.

It is found in the plastid. The protein localises to the chloroplast. Its function is as follows. Component of the chloroplast ribosome (chloro-ribosome), a dedicated translation machinery responsible for the synthesis of chloroplast genome-encoded proteins, including proteins of the transcription and translation machinery and components of the photosynthetic apparatus. The chain is Large ribosomal subunit protein bL17c (RPL17) from Spinacia oleracea (Spinach).